The sequence spans 673 residues: Protein kinase ORF74 (673 aa).

One can recognise a Protein kinase domain in the interval 128–404 (TDTDEAVARG…ARELLVYPRY (277 aa)). Asp-252 serves as the catalytic Proton acceptor. Residues 340-364 (MDNDALDSRRTGRDGDPVNPEGFGT) are disordered. Positions 345–355 (LDSRRTGRDGD) are enriched in basic and acidic residues.

Belongs to the protein kinase superfamily. Ser/Thr protein kinase family.

The catalysed reaction is L-seryl-[protein] + ATP = O-phospho-L-seryl-[protein] + ADP + H(+). It catalyses the reaction L-threonyl-[protein] + ATP = O-phospho-L-threonyl-[protein] + ADP + H(+). The sequence is that of Protein kinase ORF74 (ORF74) from Ictalurid herpesvirus 1 (strain Auburn) (IcHV-1).